We begin with the raw amino-acid sequence, 227 residues long: Calcium-binding protein 1 (227 aa).

The N-myristoyl glycine moiety is linked to residue Gly2. A lipid anchor (S-palmitoyl cysteine) is attached at Cys4. 4 consecutive EF-hand domains span residues 82 to 117 (EEIE…MGYM), 136 to 153 (GHVD…KLLA), 159 to 194 (IGVK…LLGH), and 196 to 227 (VGHR…MMSR). Asp95, Asp97, Asp99, Tyr101, and Asp106 together coordinate Ca(2+). The Ca(2+) site is built by Asp172, Asn174, Asp176, and Glu178. Ser180 is modified (phosphoserine). 6 residues coordinate Ca(2+): Glu183, Asp209, Asn211, Asp213, Arg215, and Glu220.

In terms of assembly, homodimer; when bound to calcium or magnesium. Interacts (via C-terminus) with ITPR1, ITPR2 and ITPR3. This binding is calcium dependent and the interaction correlates with calcium concentration. An additional calcium-independent interaction with the N-terminus of ITPR1 results in a decreased InsP(3) binding to the receptor. Interacts with CACNA1A (via C-terminal CDB motif) in the pre- and postsynaptic membranes. Interacts with CACNA1D and CACNA1C (via C-terminal C and IQ motifs). The binding to the C motif is calcium independent whereas the binding to IQ requires the presence of calcium and is mutually exclusive with calmodulin binding. Interacts with TRPC5 (via C-terminus). Interacts (via EF-hands 1 and 2) at microtubules with MAP1LC3B. Interacts with MYO1C. Interacts (via EF-hands 1 and 2) with NSMF (via the central NLS-containing motif region), the interaction occurs in a calcium dependent manner after synaptic NMDA receptor stimulation and prevents nuclear import of NSMF. Interacts with SPACA9 homolog. In terms of processing, phosphorylated. The phosphorylation regulates the activity. In terms of tissue distribution, expressed in the inner retina, specifically in amacrine cells and in cone OFF-bipolar cells (at protein level).

Modulates calcium-dependent activity of inositol 1,4,5-triphosphate receptors (ITPRs). Inhibits agonist-induced intracellular calcium signaling. Enhances inactivation and does not support calcium-dependent facilitation of voltage-dependent P/Q-type calcium channels. Causes calcium-dependent facilitation and inhibits inactivation of L-type calcium channels by binding to the same sites as calmodulin in the C-terminal domain of CACNA1C, but has an opposite effect on channel function. Suppresses the calcium-dependent inactivation of CACNA1D. Inhibits TRPC5 channels. Prevents NMDA receptor-induced cellular degeneration. Required for the normal transfer of light signals through the retina. The sequence is that of Calcium-binding protein 1 (Cabp1) from Mus musculus (Mouse).